The following is a 110-amino-acid chain: Protein NATD1 (110 aa).

The N-acetyltransferase domain maps to 19–109; the sequence is EHDRQRRQFS…PLPQYLERLQ (91 aa).

It belongs to the NATD1 family. As to expression, expressed in the heart, testis, kidney and lung.

The protein is Protein NATD1 (Natd1) of Mus musculus (Mouse).